We begin with the raw amino-acid sequence, 283 residues long: Formamidopyrimidine-DNA glycosylase (283 aa).

The Schiff-base intermediate with DNA role is filled by Pro-2. Glu-3 serves as the catalytic Proton donor. Lys-61 (proton donor; for beta-elimination activity) is an active-site residue. 3 residues coordinate DNA: His-94, Arg-113, and Lys-159. Residues 245–279 form an FPG-type zinc finger; it reads DAYGREGESCRRCGAVMRREKFMNRSSFYCPKCQP. Residue Arg-269 is the Proton donor; for delta-elimination activity of the active site.

It belongs to the FPG family. Monomer. It depends on Zn(2+) as a cofactor.

The catalysed reaction is Hydrolysis of DNA containing ring-opened 7-methylguanine residues, releasing 2,6-diamino-4-hydroxy-5-(N-methyl)formamidopyrimidine.. It catalyses the reaction 2'-deoxyribonucleotide-(2'-deoxyribose 5'-phosphate)-2'-deoxyribonucleotide-DNA = a 3'-end 2'-deoxyribonucleotide-(2,3-dehydro-2,3-deoxyribose 5'-phosphate)-DNA + a 5'-end 5'-phospho-2'-deoxyribonucleoside-DNA + H(+). Its function is as follows. Involved in base excision repair of DNA damaged by oxidation or by mutagenic agents. Acts as a DNA glycosylase that recognizes and removes damaged bases. Has a preference for oxidized purines, such as 7,8-dihydro-8-oxoguanine (8-oxoG). Has AP (apurinic/apyrimidinic) lyase activity and introduces nicks in the DNA strand. Cleaves the DNA backbone by beta-delta elimination to generate a single-strand break at the site of the removed base with both 3'- and 5'-phosphates. The protein is Formamidopyrimidine-DNA glycosylase of Mycolicibacterium paratuberculosis (strain ATCC BAA-968 / K-10) (Mycobacterium paratuberculosis).